The sequence spans 196 residues: Probable splicing factor, arginine/serine-rich 4 (196 aa).

The RRM domain maps to 19-97; the sequence is TSLKIDNLSY…RELRVTLAKY (79 aa). A compositionally biased stretch (basic and acidic residues) spans 91–106; sequence RVTLAKYDRPSDERGG. The disordered stretch occupies residues 91–196; sequence RVTLAKYDRP…SPSRSRSNSR (106 aa). Over residues 112-141 the composition is skewed to basic residues; the sequence is GRRRSRSPRRRSRSPRYSRSRSPRRSRSRT. Composition is skewed to basic and acidic residues over residues 145-160 and 167-176; these read PSRDRRDSPDRRDNSR and PPREDGSPKE. Low complexity predominate over residues 184 to 196; the sequence is ASRSPSRSRSNSR.

Belongs to the splicing factor SR family. Post-translationally, extensively phosphorylated on serine residues in the RS domain.

Its subcellular location is the nucleus. In terms of biological role, may play a functionally redundant role in embryogenesis. This is Probable splicing factor, arginine/serine-rich 4 (rsp-4) from Caenorhabditis elegans.